The following is a 396-amino-acid chain: S-adenosylmethionine synthase (396 aa).

His-16 contributes to the ATP binding site. Mg(2+) is bound at residue Asp-18. Glu-44 provides a ligand contact to K(+). Positions 57 and 100 each coordinate L-methionine. Residues 100–110 (QSPDIAQGVDD) form a flexible loop region. Residues 174–176 (DAK), 241–242 (RF), Asp-250, 256–257 (RK), Ala-273, and Lys-277 each bind ATP. Asp-250 contributes to the L-methionine binding site. Lys-281 contacts L-methionine.

This sequence belongs to the AdoMet synthase family. In terms of assembly, homotetramer; dimer of dimers. Mg(2+) serves as cofactor. Requires K(+) as cofactor.

Its subcellular location is the cytoplasm. The enzyme catalyses L-methionine + ATP + H2O = S-adenosyl-L-methionine + phosphate + diphosphate. The protein operates within amino-acid biosynthesis; S-adenosyl-L-methionine biosynthesis; S-adenosyl-L-methionine from L-methionine: step 1/1. Catalyzes the formation of S-adenosylmethionine (AdoMet) from methionine and ATP. The overall synthetic reaction is composed of two sequential steps, AdoMet formation and the subsequent tripolyphosphate hydrolysis which occurs prior to release of AdoMet from the enzyme. This Pediococcus pentosaceus (strain ATCC 25745 / CCUG 21536 / LMG 10740 / 183-1w) protein is S-adenosylmethionine synthase.